A 274-amino-acid chain; its full sequence is Thiamine kinase (274 aa).

It belongs to the thiamine kinase family.

It carries out the reaction thiamine + ATP = thiamine phosphate + ADP + H(+). The protein operates within cofactor biosynthesis; thiamine diphosphate biosynthesis; thiamine phosphate from thiamine: step 1/1. Its function is as follows. Catalyzes the ATP-dependent phosphorylation of thiamine to thiamine phosphate. Is involved in thiamine salvage. This Escherichia coli O157:H7 (strain EC4115 / EHEC) protein is Thiamine kinase.